Here is a 212-residue protein sequence, read N- to C-terminus: TATA-box-binding protein 2 (212 aa).

Tandem repeats lie at residues T30–G114 and S120–L201.

This sequence belongs to the TBP family. In terms of assembly, belongs to the TFIID complex together with the TBP-associated factors (TAFs). Binds DNA as monomer.

Its subcellular location is the nucleus. General transcription factor that functions at the core of the DNA-binding multiprotein factor TFIID. Binding of TFIID to the TATA box is the initial transcriptional step of the pre-initiation complex (PIC), playing a role in the activation of eukaryotic genes transcribed by RNA polymerase II. This chain is TATA-box-binding protein 2, found in Entamoeba histolytica (strain ATCC 30459 / HM-1:IMSS / ABRM).